Here is a 287-residue protein sequence, read N- to C-terminus: HTH-type transcriptional regulator MurR (287 aa).

In terms of domain architecture, HTH rpiR-type spans 1–77; sequence MLYLAKMRNA…MALIEEHSVS (77 aa). The segment at residues 37–56 is a DNA-binding region (H-T-H motif); sequence SRNMAKQLEISQSSIVKFAQ. In terms of domain architecture, SIS spans 128–268; sequence VINLISKAPL…FVGMVQLNDV (141 aa).

Homotetramer.

It functions in the pathway amino-sugar metabolism; N-acetylmuramate degradation [regulation]. In terms of biological role, represses the expression of the murPQ operon involved in the uptake and degradation of N-acetylmuramic acid (MurNAc). Binds to two adjacent inverted repeats within the operator region. MurNAc 6-phosphate, the substrate of MurQ, is the specific inducer that weakens binding of MurR to the operator. This Salmonella arizonae (strain ATCC BAA-731 / CDC346-86 / RSK2980) protein is HTH-type transcriptional regulator MurR.